Reading from the N-terminus, the 641-residue chain is MAMIGALPKELAEAVSTSRLLVVGAGGIGCELLKNLVLTGFINLDVIDLDTIDVSNLNRQFLFQKKHVGRSKAQVAKESVLQFCPEANITAYHDSIMNPDYNVEFFKQFTMVMNALDNNAARNHVNRMCLAAGIPLIESGTAGYLGQVTVVKKGVTECYECQPKPTQKTFPGCTIRNTPSEPIHCIVWAKYLFNQLFGEEDADQEVAPDIADPEAAWDPTQAAERANASNVDGDIKRVSTKQWAKSTGYDPIKLFNKLFRDDIKYLLTMDRLWRKRKPPVPLEWSSLHNKENCSETQNESSLQGLKDQKVLDVTSCAQLFSKSVETLREQLREKGNGAELVWDKDDPPAMDFVTAAANLRMHIFSMNMKSRFDVKSMAGNIIPAIATTNAVISGLIVLEGLKILSGNTEQCRTVFLNKQPNPRKKLLVPCSLDPPNPSCYVCAIKPEVTVKLNVHKVTVQMLQDKILKEKFAMVAPDVQIEDGKGTILISSEAGETDANNNRKISEFGIRNSSQLQADDFLQDYTLMINILHSDEMEKDVDFEVVGDVPEKGPQKPSEQSVKNITNGSDDGAQPSTSKAQDQDDVLIVDSDEESPSSSNADINMDSASLKRKLPEEETISSTKRKRLEPPVEEDDDIIALD.

ATP contacts are provided by residues 24 to 29 (GAGGIG), Asp48, 56 to 59 (NLNR), Lys72, 95 to 96 (SI), and 117 to 122 (DNNAAR). Zn(2+) is bound by residues Cys158 and Cys161. The Glycyl thioester intermediate role is filled by Cys173. A Glycyl lysine isopeptide (Lys-Gly) (interchain with G-Cter in SUMO) cross-link involves residue Lys190. Lys236 participates in a covalent cross-link: Glycyl lysine isopeptide (Lys-Gly) (interchain with G-Cter in SUMO1). Glycyl lysine isopeptide (Lys-Gly) (interchain with G-Cter in SUMO) cross-links involve residues Lys257 and Lys275. Cys439 and Cys442 together coordinate Zn(2+). The tract at residues 546 to 641 (GDVPEKGPQK…EEDDDIIALD (96 aa)) is disordered. The span at 556-579 (PSEQSVKNITNGSDDGAQPSTSKA) shows a compositional bias: polar residues. Positions 582–594 (QDDVLIVDSDEES) are enriched in acidic residues. Glycyl lysine isopeptide (Lys-Gly) (interchain with G-Cter in SUMO) cross-links involve residues Lys610, Lys612, and Lys623. Positions 630–641 (PVEEDDDIIALD) are enriched in acidic residues.

This sequence belongs to the ubiquitin-activating E1 family. As to quaternary structure, heterodimer of sae1 and uba2/sae2. The heterodimer corresponds to the two domains that are encoded on a single polypeptide chain in ubiquitin-activating enzyme E1. Interacts with ube2i. Post-translationally, sumoylated with SUMO1 and SUMO2/3 and by UBC9. Sumoylation at Lys-236 inhibits enzymatic activity. Sumoylation at the C-terminal lysine cluster plays an essential role in nuclear trafficking.

It localises to the cytoplasm. The protein resides in the nucleus. It functions in the pathway protein modification; protein sumoylation. The heterodimer acts as an E1 ligase for sumo1, sumo2, and sumo3. It mediates ATP-dependent activation of sumo proteins followed by formation of a thioester bond between a sumo protein and a conserved active site cysteine residue on uba2/sae2. The polypeptide is SUMO-activating enzyme subunit 2 (uba2) (Xenopus tropicalis (Western clawed frog)).